Reading from the N-terminus, the 1111-residue chain is Nuclear migration and anchoring protein unc-84 (1111 aa).

Residues 1 to 509 (MAPATEADNN…LTDKKSSKFS (509 aa)) are Nuclear-facing. Required for nuclear envelope localization regions lie at residues 118 to 244 (YILR…SQTL) and 503 to 507 (KKSSK). Residues 232 to 253 (ERASRMTTRSQTLERSRKFDGL) form a disordered region. Over residues 243 to 252 (TLERSRKFDG) the composition is skewed to basic and acidic residues. The chain crosses the membrane as a helical span at residues 510 to 530 (WCQILGLLLALLFAIFLLGFL). Over 531–1111 (TSDNTAIRVK…LRVHGKVVQV (581 aa)) the chain is Perinuclear space. An interaction with zyg-12 region spans residues 912 to 1111 (QYDKNHLEAI…LRVHGKVVQV (200 aa)). In terms of domain architecture, SUN spans 945–1109 (GGAVVSTRCS…YRLRVHGKVV (165 aa)).

Component of the unc-83-unc-84 LINC complex which contains at least unc-83 and unc-84. Within the unc-83-unc-84 LINC complex interacts (via C-terminus) with unc-83; the interaction is probably required to recruit unc-83 to the nuclear membrane. Most likely interacts with anc-1; the interaction is probably required to recruit anc-1 to the nuclear envelope. Interacts (via C-terminus) with zyg-12 (via C-terminus); the interaction is direct. May interact with lmn-1; this interaction may be required to complete the connection between the nuclear lamina and the cytoskeleton. In terms of tissue distribution, expressed in all somatic cells. Not expressed in germ cells in the mitotic and transition zones of the gonad. One study shows expression at the beginning of the late pachytene stage in the proximal gonad, but there is no expression in the male germline, suggesting expression is specific to oogenesis in hermaphrodites.

It is found in the nucleus inner membrane. The protein localises to the cytoplasm. Its subcellular location is the cytoskeleton. Involved in nuclear migration and anchoring in hypodermal precursor cells. Most likely recruits anc-1 to the nuclear envelope where anc-1 functions to tether the nucleus to the actin cytoskeleton. Component of the unc-83-unc-84 LINC (LInker of Nucleoskeleton and Cytoskeleton) complex where it recruits and interacts with unc-83 to form a bridge connecting the nuclear envelope to the cytoskeleton which allows for nuclear transport along microtubules. Its role in nuclear migration may be in association with lamin, lmn-1. Regulates nuclear migrations in one-cell embryos, controlling the posterior migration of the male pronucleus following fertilization. Not required for centrosome attachment to the nucleus. Plays a role in the maintenance of the nuclear envelope architecture in body wall muscle cells. May be involved in DNA damage repair through an association with zyg-12. Potentially has roles in homologous recombination, double strand break repair and meiotic recombination. Specifically, may in part inhibit non-homologous end joining repair, most likely through recruiting fan-1 to the nucleoplasm, to facilitate the repair of DNA cross-links. This is Nuclear migration and anchoring protein unc-84 from Caenorhabditis elegans.